Reading from the N-terminus, the 370-residue chain is Putative F-box protein At3g10430 (370 aa).

An F-box domain is found at 1 to 47 (MGSSLPFDLILEILQRTPAESLLRFKSTCKKWYELISNDKRFMYKHL).

This Arabidopsis thaliana (Mouse-ear cress) protein is Putative F-box protein At3g10430.